Consider the following 238-residue polypeptide: Small ribosomal subunit protein uS2 (238 aa).

It belongs to the universal ribosomal protein uS2 family.

This is Small ribosomal subunit protein uS2 from Prochlorococcus marinus (strain SARG / CCMP1375 / SS120).